Consider the following 518-residue polypeptide: Probable malate:quinone oxidoreductase (518 aa).

Residues 495-518 (GAIPATTDGQSTAGTEHTPTAATV) form a disordered region. Over residues 501–518 (TDGQSTAGTEHTPTAATV) the composition is skewed to polar residues.

The protein belongs to the MQO family. FAD is required as a cofactor.

It catalyses the reaction (S)-malate + a quinone = a quinol + oxaloacetate. It participates in carbohydrate metabolism; tricarboxylic acid cycle; oxaloacetate from (S)-malate (quinone route): step 1/1. The chain is Probable malate:quinone oxidoreductase from Mycolicibacterium gilvum (strain PYR-GCK) (Mycobacterium gilvum (strain PYR-GCK)).